The sequence spans 258 residues: Translocon-associated protein subunit alpha (258 aa).

The N-terminal stretch at 1 to 24 is a signal peptide; the sequence is MMNLRVLFLALLLLASPLLQVARC. Residues 25–190 are Lumenal-facing; the sequence is QSDAEDHSSL…ESGGLLSGES (166 aa). N-linked (GlcNAc...) asparagine glycosylation is found at N57, N119, and N127. Residues 191–209 form a helical membrane-spanning segment; sequence VFLLTLGIGLLLLLGLWAY. At 210–258 the chain is on the cytoplasmic side; that stretch reads SQVQRLTKKTKKVSKVEVGTRSTEASLDEWLEGTTLAKTSSGKTKNKKN.

It belongs to the TRAP-alpha family. In terms of assembly, heterotetramer of TRAP-alpha, TRAP-beta, TRAP-delta and TRAP-gamma. In terms of processing, phosphorylated in its cytoplasmic tail.

The protein resides in the endoplasmic reticulum membrane. TRAP proteins are part of a complex whose function is to bind calcium to the ER membrane and thereby regulate the retention of ER resident proteins. May be involved in the recycling of the translocation apparatus after completion of the translocation process or may function as a membrane-bound chaperone facilitating folding of translocated proteins. This is Translocon-associated protein subunit alpha from Arabidopsis thaliana (Mouse-ear cress).